A 403-amino-acid chain; its full sequence is MSKFNRIHLVVLDSVGIGAAPDADKFFNAGVADTDSDTLGHISETAGLSVPNMAKIGLGNISRPIPLKTIPTEDNPTGYVTKLEEVSLGKDTMTGHWEIMGLNITEPFDTFWNGFPEEILTKIEEFSGRKIIREANKPYSGTAVIDDFGPRQMETGELIVYTSADPVLQIAAHEDIIPVEELYKICEYARSITLERPALLGRIIARPYVGEPGNFTRTANRHDYAVSPFQDTVLNKLADAGVPTYAVGKINDIFNGSGITNDMGHNKSNSHGIDTLIKTLQLPEFTKGFSFTNLVDFDANFGHRRDPEGYRDCLHEFDNRLPEIIANMKEDDLLLITADHGNDPTYAGTDHTREYIPLLAYSASFTGNGLIPQGHFADISATVAENFGVDTAMIGESFLGHLK.

Mn(2+)-binding residues include aspartate 13, aspartate 298, histidine 303, aspartate 339, histidine 340, and histidine 351.

Belongs to the phosphopentomutase family. Requires Mn(2+) as cofactor.

Its subcellular location is the cytoplasm. It carries out the reaction 2-deoxy-alpha-D-ribose 1-phosphate = 2-deoxy-D-ribose 5-phosphate. The catalysed reaction is alpha-D-ribose 1-phosphate = D-ribose 5-phosphate. The protein operates within carbohydrate degradation; 2-deoxy-D-ribose 1-phosphate degradation; D-glyceraldehyde 3-phosphate and acetaldehyde from 2-deoxy-alpha-D-ribose 1-phosphate: step 1/2. In terms of biological role, isomerase that catalyzes the conversion of deoxy-ribose 1-phosphate (dRib-1-P) and ribose 1-phosphate (Rib-1-P) to deoxy-ribose 5-phosphate (dRib-5-P) and ribose 5-phosphate (Rib-5-P), respectively. In Streptococcus pyogenes serotype M4 (strain MGAS10750), this protein is Phosphopentomutase.